We begin with the raw amino-acid sequence, 256 residues long: Low molecular mass lipoprotein 3 (256 aa).

The N-terminal stretch at 1–17 (MKPAIVILCLFVASLYA) is a signal peptide.

It belongs to the 30 kDa lipoprotein family. As to expression, detected in larval hemolymph (at protein level).

It is found in the secreted. The chain is Low molecular mass lipoprotein 3 from Bombyx mori (Silk moth).